Reading from the N-terminus, the 415-residue chain is Gamma-glutamyl phosphate reductase (415 aa).

It belongs to the gamma-glutamyl phosphate reductase family.

It is found in the cytoplasm. The catalysed reaction is L-glutamate 5-semialdehyde + phosphate + NADP(+) = L-glutamyl 5-phosphate + NADPH + H(+). Its pathway is amino-acid biosynthesis; L-proline biosynthesis; L-glutamate 5-semialdehyde from L-glutamate: step 2/2. Its function is as follows. Catalyzes the NADPH-dependent reduction of L-glutamate 5-phosphate into L-glutamate 5-semialdehyde and phosphate. The product spontaneously undergoes cyclization to form 1-pyrroline-5-carboxylate. This Bacillus subtilis (strain 168) protein is Gamma-glutamyl phosphate reductase.